A 283-amino-acid chain; its full sequence is Protein FdhE homolog (283 aa).

The protein belongs to the FdhE family.

Its subcellular location is the cytoplasm. Its function is as follows. Necessary for formate dehydrogenase activity. This is Protein FdhE homolog from Aquifex aeolicus (strain VF5).